The following is a 278-amino-acid chain: Urease accessory protein UreD (278 aa).

It belongs to the UreD family. UreD, UreF and UreG form a complex that acts as a GTP-hydrolysis-dependent molecular chaperone, activating the urease apoprotein by helping to assemble the nickel containing metallocenter of UreC. The UreE protein probably delivers the nickel.

The protein resides in the cytoplasm. Functionally, required for maturation of urease via the functional incorporation of the urease nickel metallocenter. The polypeptide is Urease accessory protein UreD (Staphylococcus epidermidis (strain ATCC 12228 / FDA PCI 1200)).